The following is a 1281-amino-acid chain: Tubulin polyglutamylase TTLL5 (1281 aa).

Residues 62 to 407 (RYHLSYKIVR…VCQDPAQRAS (346 aa)) form the TTL domain. ATP contacts are provided by residues K180, 186–187 (RG), 208–211 (SRYI), and 221–223 (KFD). R186 is a binding site for a protein. R247 provides a ligand contact to L-glutamate. Position 268 to 269 (268 to 269 (TN)) interacts with ATP. L-glutamate is bound by residues Y270, S271, and K293. Mg(2+) is bound by residues D353, E366, and N368. Residues 378 to 488 (PLDLKIKASM…RGGFIRIFPT (111 aa)) are c-MTBD region. Residue K384 participates in L-glutamate binding. Disordered regions lie at residues 577-614 (MNVK…LREN), 1072-1114 (SASA…LQTG), and 1199-1281 (SSAT…HTKI). Residues 584–604 (ESEEEEEVALDNEDEEQEASQ) show a composition bias toward acidic residues. Polar residues-rich tracts occupy residues 1086-1113 (SGPT…SLQT), 1199-1212 (SSAT…TTLP), 1240-1263 (ATSQ…SSLN), and 1270-1281 (ITSSTDPAHTKI).

The protein belongs to the tubulin--tyrosine ligase family. As to quaternary structure, interacts with the transcriptional coactivators NCOA1/SRC-1 and NCOA2/TIF2. Requires Mg(2+) as cofactor. Expressed in the retina, found in the rod and cone photoreceptors (at protein level). Widely expressed with highest levels in heart and skeletal muscle and low levels in other tissues.

It is found in the cell projection. The protein localises to the cilium. The protein resides in the cytoplasm. It localises to the cytoskeleton. Its subcellular location is the cilium basal body. It is found in the nucleus. It carries out the reaction L-glutamyl-[protein] + L-glutamate + ATP = gamma-L-glutamyl-L-glutamyl-[protein] + ADP + phosphate + H(+). The enzyme catalyses (L-glutamyl)(n)-gamma-L-glutamyl-L-glutamyl-[protein] + L-glutamate + ATP = (L-glutamyl)(n+1)-gamma-L-glutamyl-L-glutamyl-[protein] + ADP + phosphate + H(+). In terms of biological role, polyglutamylase which modifies tubulin, generating polyglutamate side chains on the gamma-carboxyl group of specific glutamate residues within the C-terminal tail of tubulin. Preferentially mediates ATP-dependent initiation step of the polyglutamylation reaction over the elongation step. Preferentially modifies the alpha-tubulin tail over a beta-tail. Required for CCSAP localization to both polyglutamylated spindle and cilia microtubules. Increases the effects of transcriptional coactivator NCOA2/TIF2 in glucocorticoid receptor-mediated repression and induction and in androgen receptor-mediated induction. This is Tubulin polyglutamylase TTLL5 from Homo sapiens (Human).